A 1529-amino-acid polypeptide reads, in one-letter code: Mediator of RNA polymerase II transcription subunit 1.1 (1529 aa).

3 disordered regions span residues 685 to 740 (PDAA…VVGE), 807 to 919 (QYRM…MRDN), and 933 to 1529 (PDIE…IDDE). The span at 693-702 (GKQRKPRAKK) shows a compositional bias: basic residues. Low complexity-rich tracts occupy residues 722-739 (GAAA…GVVG) and 807-828 (QYRM…PQQQ). The span at 894 to 905 (TPSPLSAPPKPF) shows a compositional bias: pro residues. Residues 908–919 (EQHHFGTKMRDN) are compositionally biased toward basic and acidic residues. Composition is skewed to low complexity over residues 958 to 990 (SSSS…TAQT) and 1008 to 1023 (QEQA…IQQQ). The stretch at 1008–1032 (QEQALQKQEQQRIQQQDSVDSTNSE) forms a coiled coil. Polar residues-rich tracts occupy residues 1051-1061 (NQVNRVMNMSN), 1068-1089 (GSST…STGS), and 1096-1105 (TPGTSSNIAQ). Basic and acidic residues-rich tracts occupy residues 1113 to 1130 (LKKE…EKLI), 1137 to 1185 (LKVD…ERDK), 1192 to 1240 (RDRT…KELS), and 1262 to 1278 (PKKD…KDES). Residues 1169-1202 (EKEDKSQREKDKKERDKERKRRDRDRTEAKKEKD) are a coiled coil. Positions 1279–1288 (IPGPSTSSES) are enriched in low complexity. Residues 1289 to 1304 (STRKEVAPAPISRKES) show a composition bias toward basic and acidic residues. Residues 1349–1365 (SYSGSSNAGPISSSSRG) are compositionally biased toward low complexity. 2 stretches are compositionally biased toward pro residues: residues 1375–1386 (PVLPPPALPMRG) and 1477–1500 (QPPP…APPS).

Belongs to the Mediator complex subunit 1 family. As to quaternary structure, component of the Mediator complex.

The protein localises to the nucleus. Component of the Mediator complex, a coactivator involved in the regulated transcription of nearly all RNA polymerase II-dependent genes. Mediator functions as a bridge to convey information from gene-specific regulatory proteins to the basal RNA polymerase II transcription machinery. Mediator is recruited to promoters by direct interactions with regulatory proteins and serves as a scaffold for the assembly of a functional preinitiation complex with RNA polymerase II and the general transcription factors. This chain is Mediator of RNA polymerase II transcription subunit 1.1 (sop-3), found in Caenorhabditis briggsae.